Here is a 164-residue protein sequence, read N- to C-terminus: MKGILDSILRVGRMIFAPTKTVQYPEEKLPLAPRTRGRIVLTRDPDGQERCVACNLCAAACPVDCIDVVKAETPDGRWYPESFRINFARCIFCGYCEEACPTSAIQLTPDVELADYRRGFLQYEKEDLLISGEGKHPGYRYWDVAGKAIAGKAQDPVDPKDLCP.

2 consecutive 4Fe-4S ferredoxin-type domains span residues 39–71 and 81–110; these read IVLTRDPDGQERCVACNLCAAACPVDCIDVVKA and ESFRINFARCIFCGYCEEACPTSAIQLTPD. Residues C51, C54, C57, C61, C90, C93, C96, and C100 each contribute to the [4Fe-4S] cluster site.

Belongs to the complex I 23 kDa subunit family. As to quaternary structure, NDH-1 is composed of 14 different subunits. Subunits NuoA, H, J, K, L, M, N constitute the membrane sector of the complex. It depends on [4Fe-4S] cluster as a cofactor.

It is found in the cell inner membrane. The catalysed reaction is a quinone + NADH + 5 H(+)(in) = a quinol + NAD(+) + 4 H(+)(out). Functionally, NDH-1 shuttles electrons from NADH, via FMN and iron-sulfur (Fe-S) centers, to quinones in the respiratory chain. The immediate electron acceptor for the enzyme in this species is believed to be ubiquinone. Couples the redox reaction to proton translocation (for every two electrons transferred, four hydrogen ions are translocated across the cytoplasmic membrane), and thus conserves the redox energy in a proton gradient. In Cereibacter sphaeroides (strain ATCC 17023 / DSM 158 / JCM 6121 / CCUG 31486 / LMG 2827 / NBRC 12203 / NCIMB 8253 / ATH 2.4.1.) (Rhodobacter sphaeroides), this protein is NADH-quinone oxidoreductase subunit I 2.